The following is a 407-amino-acid chain: Tyrosine--tRNA ligase (407 aa).

Residue Tyr-35 participates in L-tyrosine binding. The 'HIGH' region signature appears at 40-49; sequence PTADSLHVGH. Residues Tyr-168 and Gln-172 each contribute to the L-tyrosine site. A 'KMSKS' region motif is present at residues 228–232; it reads KMGKT. Lys-231 lines the ATP pocket. Residues 341–405 form the S4 RNA-binding domain; that stretch reads NPLVDLLAKC…RGKKNFNRIV (65 aa).

The protein belongs to the class-I aminoacyl-tRNA synthetase family. TyrS type 1 subfamily. Homodimer.

The protein resides in the cytoplasm. It carries out the reaction tRNA(Tyr) + L-tyrosine + ATP = L-tyrosyl-tRNA(Tyr) + AMP + diphosphate + H(+). In terms of biological role, catalyzes the attachment of tyrosine to tRNA(Tyr) in a two-step reaction: tyrosine is first activated by ATP to form Tyr-AMP and then transferred to the acceptor end of tRNA(Tyr). The chain is Tyrosine--tRNA ligase from Clostridium botulinum (strain 657 / Type Ba4).